We begin with the raw amino-acid sequence, 948 residues long: Phosphatidylinositol-glycan-specific phospholipase D (948 aa).

The N-terminal stretch at 1–24 (MKNKIILLWLLLIVILCTISNVKG) is a signal peptide. Asn39, Asn78, Asn148, Asn300, Asn433, Asn452, Asn506, and Asn535 each carry an N-linked (GlcNAc...) asparagine glycan. 4 FG-GAP repeats span residues 451–512 (TNFT…SVTI), 526–588 (QVAT…NPAG), 596–656 (LPSI…RISG), and 663–724 (DADY…LNSF). N-linked (GlcNAc...) asparagine glycosylation is found at Asn749 and Asn788. FG-GAP repeat units follow at residues 799-861 (NLLL…LTND) and 895-948 (SSGG…NIFQ).

Belongs to the GPLD1 family. Ca(2+) is required as a cofactor.

It is found in the secreted. It catalyses the reaction a 6-(alpha-D-glucosaminyl)-1-(1,2-diacyl-sn-glycero-3-phospho)-1D-myo-inositol + H2O = 6-(alpha-D-glucosaminyl)-1D-myo-inositol + a 1,2-diacyl-sn-glycero-3-phosphate + H(+). Functionally, hydrolyzes the inositol phosphate linkage in proteins anchored by phosphatidylinositol glycans (GPI-anchor) thus releasing these proteins from the membrane. May also cleave GPI anchor intermediates intracellularly. This Dictyostelium discoideum (Social amoeba) protein is Phosphatidylinositol-glycan-specific phospholipase D (pldG).